The primary structure comprises 411 residues: MKTLIINIKELLQVRDNHIDKVSGTEMGVLPKIDDAFLLIEDNLIANFGSMSNCPTIKTDQTIDAKGKIVLPTWCDSHTHIVYAGNRIQEFVDRIKGLSYEEIANRGGGILNSAKNLNQTSEEDIYNQSKVRLEEIMQQGTGAVEIKSGYGLTVDGEIKMLRVIKKLAANYPIKIKATFLGAHAFPSEYKENHADYINLIVNEMLPKIAAEKLADYIDVFLETGYFSVQETEKIIEAGKKYGLIPKIHVNQFTAIGGIKSCVKHEALSVDHLEIVTNEDIENLKGSKTMPVALPSCSYFISIPYTPARKMIAAGLPLALATDYNPGTTPSGNMNFVVATACIKMKMTPEEAINAATINGAYAMGISQTHGSITKGKSANIIITKPLTTYYEMAYSFTSNLIENVFIEGKII.

H78 and H80 together coordinate Fe(3+). Zn(2+)-binding residues include H78 and H80. 3 residues coordinate 4-imidazolone-5-propanoate: R87, Y150, and H183. Y150 contacts N-formimidoyl-L-glutamate. Fe(3+) is bound at residue H248. H248 contributes to the Zn(2+) binding site. Q251 contributes to the 4-imidazolone-5-propanoate binding site. Position 322 (D322) interacts with Fe(3+). D322 provides a ligand contact to Zn(2+). N-formimidoyl-L-glutamate contacts are provided by N324 and G326. 4-imidazolone-5-propanoate is bound at residue T327.

It belongs to the metallo-dependent hydrolases superfamily. HutI family. It depends on Zn(2+) as a cofactor. Fe(3+) is required as a cofactor.

The protein localises to the cytoplasm. The catalysed reaction is 4-imidazolone-5-propanoate + H2O = N-formimidoyl-L-glutamate. The protein operates within amino-acid degradation; L-histidine degradation into L-glutamate; N-formimidoyl-L-glutamate from L-histidine: step 3/3. Its function is as follows. Catalyzes the hydrolytic cleavage of the carbon-nitrogen bond in imidazolone-5-propanoate to yield N-formimidoyl-L-glutamate. It is the third step in the universal histidine degradation pathway. This is Imidazolonepropionase from Flavobacterium psychrophilum (strain ATCC 49511 / DSM 21280 / CIP 103535 / JIP02/86).